A 99-amino-acid chain; its full sequence is Large ribosomal subunit protein bL21 (99 aa).

The protein belongs to the bacterial ribosomal protein bL21 family. As to quaternary structure, part of the 50S ribosomal subunit. Contacts protein L20.

Functionally, this protein binds to 23S rRNA in the presence of protein L20. This Neorickettsia sennetsu (strain ATCC VR-367 / Miyayama) (Ehrlichia sennetsu) protein is Large ribosomal subunit protein bL21.